A 78-amino-acid polypeptide reads, in one-letter code: NAD(P)H-quinone oxidoreductase subunit O (78 aa).

Belongs to the complex I NdhO subunit family. NDH-1 can be composed of about 15 different subunits; different subcomplexes with different compositions have been identified which probably have different functions.

It is found in the cell inner membrane. It catalyses the reaction a plastoquinone + NADH + (n+1) H(+)(in) = a plastoquinol + NAD(+) + n H(+)(out). The enzyme catalyses a plastoquinone + NADPH + (n+1) H(+)(in) = a plastoquinol + NADP(+) + n H(+)(out). NDH-1 shuttles electrons from an unknown electron donor, via FMN and iron-sulfur (Fe-S) centers, to quinones in the respiratory and/or the photosynthetic chain. The immediate electron acceptor for the enzyme in this species is believed to be plastoquinone. Couples the redox reaction to proton translocation, and thus conserves the redox energy in a proton gradient. Cyanobacterial NDH-1 also plays a role in inorganic carbon-concentration. The protein is NAD(P)H-quinone oxidoreductase subunit O of Gloeobacter violaceus (strain ATCC 29082 / PCC 7421).